Here is a 1478-residue protein sequence, read N- to C-terminus: ATP-binding cassette transporter abc2 (1478 aa).

At 1–25 (MVLEQDLDPFVGGNWMNSAYKGFTF) the chain is on the vacuolar side. Residues 26–46 (LSATWLAPNIYLLISGCLQYF) traverse the membrane as a helical segment. The Cytoplasmic portion of the chain corresponds to 47 to 65 (YEVRKRSHYFHFRRFWTIW). A helical transmembrane segment spans residues 66-85 (LKSLVIMVLLFTHIYDCYKT). N86 carries N-linked (GlcNAc...) asparagine glycosylation. The Vacuolar portion of the chain corresponds to 86 to 90 (NESVW). The chain crosses the membrane as a helical span at residues 91 to 104 (NVLSIITYFLALFL). Over 105 to 116 (HVVEQPTLRIPM) the chain is Cytoplasmic. Residues 117-137 (ASLLMFWLFKFLASALVLLLR) traverse the membrane as a helical segment. Residues 138–154 (PNYTMFPMLNVVPSITF) are Vacuolar-facing. N139 is a glycosylation site (N-linked (GlcNAc...) asparagine). The chain crosses the membrane as a helical span at residues 155–175 (FCSLVCLLAEIYVPPANRVWY). The Cytoplasmic portion of the chain corresponds to 176-259 (PDDAAELEET…KKSSLYMWGV (84 aa)). The helical transmembrane segment at 260–280 (LFLNHWKLTVVIIVLKLVQDV) threads the bilayer. One can recognise an ABC transmembrane type-1 1 domain in the interval 268 to 557 (TVVIIVLKLV…LPIVVSSVLE (290 aa)). At 281–310 (VAFIQPNLIRKIVIFVSSYSSEHPQPPQVG) the chain is on the vacuolar side. Residues 311–331 (FSLAIAMFLTNVVQTALLQQY) traverse the membrane as a helical segment. Topologically, residues 332 to 387 (FQLGMVLGMRWRSELITAIYRKSLRLSSAARQSRSVGDIVNYMSVDTQKVCDLTMF) are cytoplasmic. Residues 388-408 (LFVIVSGPFQIVLALTNLYHL) traverse the membrane as a helical segment. At 409-411 (VGY) the chain is on the vacuolar side. The helical transmembrane segment at 412–432 (GALSGAFVTFLLFPCNVVIAS) threads the bilayer. Over 433–495 (IFKRFQNRQM…MLKKIGIVNT (63 aa)) the chain is Cytoplasmic. Residues 496-516 (IGNFTWLFAPILVSAATFGTF) form a helical membrane-spanning segment. Over 517 to 539 (IVLYGKTRVLSVDIVFACLSLFN) the chain is Vacuolar. A helical transmembrane segment spans residues 540 to 560 (LLQFPLTMLPIVVSSVLEASV). The Cytoplasmic portion of the chain corresponds to 561-910 (AISRIYGFLT…VKWKVYWTYF (350 aa)). One can recognise an ABC transporter 1 domain in the interval 593-821 (LEIKKGTFSW…PDSQLFQLLS (229 aa)). 631 to 638 (GKVGMGKS) lines the ATP pocket. A disordered region spans residues 828–867 (TASSTGADTPLSRSQSVITSSTDVTSSASRSSDTVSNYPK). Residues 829 to 840 (ASSTGADTPLSR) are compositionally biased toward polar residues. S839, S843, and S863 each carry phosphoserine. The span at 841-863 (SQSVITSSTDVTSSASRSSDTVS) shows a compositional bias: low complexity. A helical membrane pass occupies residues 911–931 (KACSLFLIFLYFLFIIGGIGM). The region spanning 918-1202 (IFLYFLFIIG…VVRQSVDVET (285 aa)) is the ABC transmembrane type-1 2 domain. Residues 932 to 968 (NVGTNVWLKHWSEVNTQLGYNPKPYFYLGIYTLFGLL) lie on the Vacuolar side of the membrane. Residues 969-990 (SCALISLSSLTITVFCAIKSCR) traverse the membrane as a helical segment. The Cytoplasmic segment spans residues 991–1033 (YLHDSMVKAVLRAPMSFFETTPTGRILNRFSSDVYRVDEVISR). A helical transmembrane segment spans residues 1034 to 1054 (VFMFFFRNLFQIVFVLAVICY). Position 1055 (S1055) is a topological domain, vacuolar. Residues 1056–1076 (SPMFMILIVPLFFLYRYNQVY) form a helical membrane-spanning segment. Residues 1077-1147 (YTQTSRELKR…SSNRWQAIRV (71 aa)) are Cytoplasmic-facing. The helical transmembrane segment at 1148–1168 (EAIGALVVFSSAFFGVLSAVR) threads the bilayer. At 1169–1172 (GNPN) the chain is on the vacuolar side. Residues 1173-1193 (SGLVGLSLSYAVQITQSLTFV) traverse the membrane as a helical segment. At 1194–1478 (VRQSVDVETN…YSLAKESGLI (285 aa)) the chain is on the cytoplasmic side. Residues 1239 to 1473 (IKFDHYSVRY…KASLFYSLAK (235 aa)) enclose the ABC transporter 2 domain. 1273–1280 (GRTGAGKS) is an ATP binding site.

Belongs to the ABC transporter superfamily. ABCC family. Conjugate transporter (TC 3.A.1.208) subfamily.

Its subcellular location is the vacuole membrane. In terms of biological role, involved in vacuolar sequestration of glutathione S-conjugates. Together with abc4, required for accumulation of a red pigment (ade pigment) in the vacuole of a mutant affected in the adenine biosynthetic pathway. This is ATP-binding cassette transporter abc2 (abc2) from Schizosaccharomyces pombe (strain 972 / ATCC 24843) (Fission yeast).